The chain runs to 736 residues: Nucleoporin nup60 (736 aa).

Residues 1–46 (MSSGPIRTLHKGKAARNRTPYDRIAASKDGNHSNGPQTPSKSIFQR) form a disordered region. Residues 19–31 (TPYDRIAASKDGN) show a composition bias toward basic and acidic residues. A compositionally biased stretch (polar residues) spans 32–43 (HSNGPQTPSKSI). Phosphoserine is present on residues Ser157, Ser159, Ser161, and Ser162. 5 disordered regions span residues 178–210 (RAAA…NSAK), 295–321 (DTSF…KTPS), 338–519 (TPSI…PNET), 565–614 (AVTD…RSLF), and 647–701 (EQAE…FPKF). 2 stretches are compositionally biased toward polar residues: residues 196-210 (RTSS…NSAK) and 295-314 (DTSF…TTAN). A compositionally biased stretch (basic and acidic residues) spans 375 to 397 (QIRPSSEKSEPEKKEPSAFETLE). Residues 456 to 473 (SATTDKPSPPVSSIFSFN) show a composition bias toward polar residues. 2 stretches are compositionally biased toward low complexity: residues 474-505 (APSA…TSFS) and 573-587 (EVSS…TMIS). Residues 588 to 597 (QPNTGFSFGS) show a composition bias toward polar residues. Basic and acidic residues predominate over residues 664–692 (EVEKPSAEGTNEHKQDATMTLEKTDKQGS).

As to quaternary structure, component of the nuclear pore complex (NPC). NPC constitutes the exclusive means of nucleocytoplasmic transport. NPCs allow the passive diffusion of ions and small molecules and the active, nuclear transport receptor-mediated bidirectional transport of macromolecules such as proteins, RNAs, ribonucleoparticles (RNPs), and ribosomal subunits across the nuclear envelope.

It localises to the nucleus. It is found in the nuclear pore complex. The protein resides in the nucleus membrane. In terms of biological role, functions as a component of the nuclear pore complex (NPC). NPC components, collectively referred to as nucleoporins (NUPs), can play the role of both NPC structural components and of docking or interaction partners for transiently associated nuclear transport factors. Active directional transport is assured by both, a Phe-Gly (FG) repeat affinity gradient for these transport factors across the NPC and a transport cofactor concentration gradient across the nuclear envelope. The polypeptide is Nucleoporin nup60 (nup60) (Schizosaccharomyces pombe (strain 972 / ATCC 24843) (Fission yeast)).